The chain runs to 66 residues: ATP synthase F(0) complex subunit 8 (66 aa).

Residues 8-24 (IWLLAVVIVLTTLMIFL) form a helical membrane-spanning segment. The residue at position 54 (Lys-54) is an N6-acetyllysine; alternate. At Lys-54 the chain carries N6-succinyllysine; alternate. Lys-57 carries the N6-acetyllysine modification.

The protein belongs to the ATPase protein 8 family. Component of the ATP synthase complex composed at least of ATP5F1A/subunit alpha, ATP5F1B/subunit beta, ATP5MC1/subunit c (homooctomer), MT-ATP6/subunit a, MT-ATP8/subunit 8, ATP5ME/subunit e, ATP5MF/subunit f, ATP5MG/subunit g, ATP5MK/subunit k, ATP5MJ/subunit j, ATP5F1C/subunit gamma, ATP5F1D/subunit delta, ATP5F1E/subunit epsilon, ATP5PF/subunit F6, ATP5PB/subunit b, ATP5PD/subunit d, ATP5PO/subunit OSCP. ATP synthase complex consists of a soluble F(1) head domain (subunits alpha(3) and beta(3)) - the catalytic core - and a membrane F(0) domain - the membrane proton channel (subunits c, a, 8, e, f, g, k and j). These two domains are linked by a central stalk (subunits gamma, delta, and epsilon) rotating inside the F1 region and a stationary peripheral stalk (subunits F6, b, d, and OSCP). Interacts with PRICKLE3.

The protein localises to the mitochondrion membrane. Its function is as follows. Subunit 8, of the mitochondrial membrane ATP synthase complex (F(1)F(0) ATP synthase or Complex V) that produces ATP from ADP in the presence of a proton gradient across the membrane which is generated by electron transport complexes of the respiratory chain. ATP synthase complex consist of a soluble F(1) head domain - the catalytic core - and a membrane F(1) domain - the membrane proton channel. These two domains are linked by a central stalk rotating inside the F(1) region and a stationary peripheral stalk. During catalysis, ATP synthesis in the catalytic domain of F(1) is coupled via a rotary mechanism of the central stalk subunits to proton translocation. In vivo, can only synthesize ATP although its ATP hydrolase activity can be activated artificially in vitro. Part of the complex F(0) domain. This chain is ATP synthase F(0) complex subunit 8, found in Mammuthus primigenius (Siberian woolly mammoth).